The sequence spans 708 residues: Polyribonucleotide nucleotidyltransferase (708 aa).

Residues D488 and D494 each contribute to the Mg(2+) site. In terms of domain architecture, KH spans 555–615; sequence PIIKVTKVDP…ENVDKAIELI (61 aa). An S1 motif domain is found at 625-692; the sequence is GEVLEGKVTR…DLGRLQFKRV (68 aa).

The protein belongs to the polyribonucleotide nucleotidyltransferase family. Requires Mg(2+) as cofactor.

The protein resides in the cytoplasm. The catalysed reaction is RNA(n+1) + phosphate = RNA(n) + a ribonucleoside 5'-diphosphate. Involved in mRNA degradation. Catalyzes the phosphorolysis of single-stranded polyribonucleotides processively in the 3'- to 5'-direction. This is Polyribonucleotide nucleotidyltransferase from Thermotoga sp. (strain RQ2).